Consider the following 644-residue polypeptide: 3-isopropylmalate dehydratase (644 aa).

Positions 400, 460, and 463 each coordinate [4Fe-4S] cluster. Residues 521–568 (SEIPGTPKQSPRQEVVAEFESEEDDVDSSSVDSAPVATPPSTGDSAGM) form a disordered region. A compositionally biased stretch (acidic residues) spans 537–547 (AEFESEEDDVD).

The protein belongs to the aconitase/IPM isomerase family. In terms of assembly, monomer. The cofactor is [4Fe-4S] cluster.

The enzyme catalyses (2R,3S)-3-isopropylmalate = (2S)-2-isopropylmalate. It functions in the pathway amino-acid biosynthesis; L-leucine biosynthesis; L-leucine from 3-methyl-2-oxobutanoate: step 2/4. In terms of biological role, catalyzes the isomerization between 2-isopropylmalate and 3-isopropylmalate, via the formation of 2-isopropylmaleate. This Mucor circinelloides f. lusitanicus (Mucor racemosus var. lusitanicus) protein is 3-isopropylmalate dehydratase (LEUA).